Consider the following 634-residue polypeptide: DNA gyrase subunit B (634 aa).

Positions 416–530 (REIYIVEGDS…NGYIYIAMPP (115 aa)) constitute a Toprim domain. Glutamate 422, aspartate 495, and aspartate 497 together coordinate Mg(2+).

The protein belongs to the type II topoisomerase GyrB family. As to quaternary structure, heterotetramer, composed of two GyrA and two GyrB chains. In the heterotetramer, GyrA contains the active site tyrosine that forms a transient covalent intermediate with DNA, while GyrB binds cofactors and catalyzes ATP hydrolysis. Requires Mg(2+) as cofactor. The cofactor is Mn(2+). It depends on Ca(2+) as a cofactor.

The protein resides in the cytoplasm. The enzyme catalyses ATP-dependent breakage, passage and rejoining of double-stranded DNA.. A type II topoisomerase that negatively supercoils closed circular double-stranded (ds) DNA in an ATP-dependent manner to modulate DNA topology and maintain chromosomes in an underwound state. Negative supercoiling favors strand separation, and DNA replication, transcription, recombination and repair, all of which involve strand separation. Also able to catalyze the interconversion of other topological isomers of dsDNA rings, including catenanes and knotted rings. Type II topoisomerases break and join 2 DNA strands simultaneously in an ATP-dependent manner. This chain is DNA gyrase subunit B, found in Borreliella burgdorferi (strain ATCC 35210 / DSM 4680 / CIP 102532 / B31) (Borrelia burgdorferi).